The primary structure comprises 213 residues: Pyrrolidone-carboxylate peptidase (213 aa).

Active-site residues include E78, C141, and H165.

Belongs to the peptidase C15 family. In terms of assembly, homotetramer.

Its subcellular location is the cytoplasm. The catalysed reaction is Release of an N-terminal pyroglutamyl group from a polypeptide, the second amino acid generally not being Pro.. Removes 5-oxoproline from various penultimate amino acid residues except L-proline. This chain is Pyrrolidone-carboxylate peptidase, found in Staphylococcus saprophyticus subsp. saprophyticus (strain ATCC 15305 / DSM 20229 / NCIMB 8711 / NCTC 7292 / S-41).